The chain runs to 214 residues: Pyridoxine/pyridoxamine 5'-phosphate oxidase (214 aa).

Substrate is bound by residues 9–12 (RRSY) and Lys68. FMN contacts are provided by residues 63–68 (RVVLLK), 78–79 (YT), Lys85, and Gln107. Residues Tyr125, Arg129, and Ser133 each coordinate substrate. Residues 142-143 (QS) and Trp187 contribute to the FMN site. 193–195 (RLH) contacts substrate. Arg197 lines the FMN pocket.

Belongs to the pyridoxamine 5'-phosphate oxidase family. Homodimer. Requires FMN as cofactor.

The catalysed reaction is pyridoxamine 5'-phosphate + O2 + H2O = pyridoxal 5'-phosphate + H2O2 + NH4(+). The enzyme catalyses pyridoxine 5'-phosphate + O2 = pyridoxal 5'-phosphate + H2O2. Its pathway is cofactor metabolism; pyridoxal 5'-phosphate salvage; pyridoxal 5'-phosphate from pyridoxamine 5'-phosphate: step 1/1. It participates in cofactor metabolism; pyridoxal 5'-phosphate salvage; pyridoxal 5'-phosphate from pyridoxine 5'-phosphate: step 1/1. Functionally, catalyzes the oxidation of either pyridoxine 5'-phosphate (PNP) or pyridoxamine 5'-phosphate (PMP) into pyridoxal 5'-phosphate (PLP). The chain is Pyridoxine/pyridoxamine 5'-phosphate oxidase from Christiangramia forsetii (strain DSM 17595 / CGMCC 1.15422 / KT0803) (Gramella forsetii).